The primary structure comprises 369 residues: UDP-3-O-(3-hydroxymyristoyl)glucosamine N-acyltransferase (369 aa).

H240 serves as the catalytic Proton acceptor.

It belongs to the transferase hexapeptide repeat family. LpxD subfamily. Homotrimer.

It catalyses the reaction a UDP-3-O-[(3R)-3-hydroxyacyl]-alpha-D-glucosamine + a (3R)-hydroxyacyl-[ACP] = a UDP-2-N,3-O-bis[(3R)-3-hydroxyacyl]-alpha-D-glucosamine + holo-[ACP] + H(+). It carries out the reaction UDP-3-O-[(3R)-3-hydroxytetradecanoyl]-alpha-D-glucosamine + (3R)-hydroxytetradecanoyl-[ACP] = UDP-2-N,3-O-bis[(3R)-3-hydroxytetradecanoyl]-alpha-D-glucosamine + holo-[ACP] + H(+). The protein operates within glycolipid biosynthesis; lipid IV(A) biosynthesis; lipid IV(A) from (3R)-3-hydroxytetradecanoyl-[acyl-carrier-protein] and UDP-N-acetyl-alpha-D-glucosamine: step 3/6. Catalyzes the N-acylation of UDP-3-O-(hydroxytetradecanoyl)glucosamine using 3-hydroxytetradecanoyl-ACP as the acyl donor. Is involved in the biosynthesis of lipid A, a phosphorylated glycolipid that anchors the lipopolysaccharide to the outer membrane of the cell. The protein is UDP-3-O-(3-hydroxymyristoyl)glucosamine N-acyltransferase of Blochmanniella floridana.